A 201-amino-acid polypeptide reads, in one-letter code: Large ribosomal subunit protein uL18 (201 aa).

Belongs to the universal ribosomal protein uL18 family. In terms of assembly, part of the 50S ribosomal subunit. Contacts the 5S and 23S rRNAs.

Its function is as follows. This is one of the proteins that bind and probably mediate the attachment of the 5S RNA into the large ribosomal subunit, where it forms part of the central protuberance. The protein is Large ribosomal subunit protein uL18 of Thermococcus gammatolerans (strain DSM 15229 / JCM 11827 / EJ3).